Here is a 422-residue protein sequence, read N- to C-terminus: Adenylosuccinate synthetase (422 aa).

GTP-binding positions include 11-17 and 39-41; these read GDEGKGK and GHT. D12 (proton acceptor) is an active-site residue. Mg(2+)-binding residues include D12 and G39. IMP contacts are provided by residues 12-15, 37-40, T129, R143, N219, T234, and R298; these read DEGK and NAGH. Residue H40 is the Proton donor of the active site. 294–300 serves as a coordination point for substrate; that stretch reads VTTGRKR. GTP-binding positions include R300, 326-328, and 411-413; these read KLD and GTG.

Belongs to the adenylosuccinate synthetase family. Homodimer. It depends on Mg(2+) as a cofactor.

Its subcellular location is the cytoplasm. The enzyme catalyses IMP + L-aspartate + GTP = N(6)-(1,2-dicarboxyethyl)-AMP + GDP + phosphate + 2 H(+). Its pathway is purine metabolism; AMP biosynthesis via de novo pathway; AMP from IMP: step 1/2. Plays an important role in the de novo pathway and in the salvage pathway of purine nucleotide biosynthesis. Catalyzes the first committed step in the biosynthesis of AMP from IMP. The chain is Adenylosuccinate synthetase from Talaromyces marneffei (strain ATCC 18224 / CBS 334.59 / QM 7333) (Penicillium marneffei).